Here is a 184-residue protein sequence, read N- to C-terminus: ATP-dependent protease subunit HslV (184 aa).

T12 is a catalytic residue. 3 residues coordinate Na(+): A166, C169, and T172.

Belongs to the peptidase T1B family. HslV subfamily. A double ring-shaped homohexamer of HslV is capped on each side by a ring-shaped HslU homohexamer. The assembly of the HslU/HslV complex is dependent on binding of ATP.

The protein resides in the cytoplasm. The enzyme catalyses ATP-dependent cleavage of peptide bonds with broad specificity.. Its activity is regulated as follows. Allosterically activated by HslU binding. In terms of biological role, protease subunit of a proteasome-like degradation complex believed to be a general protein degrading machinery. This is ATP-dependent protease subunit HslV from Brucella abortus (strain S19).